We begin with the raw amino-acid sequence, 266 residues long: Orotidine 5'-phosphate decarboxylase (266 aa).

Substrate is bound by residues aspartate 37, 59–61 (KTH), 91–100 (DRKFADIGNT), tyrosine 217, and arginine 235. Lysine 93 acts as the Proton donor in catalysis.

Belongs to the OMP decarboxylase family.

It catalyses the reaction orotidine 5'-phosphate + H(+) = UMP + CO2. It participates in pyrimidine metabolism; UMP biosynthesis via de novo pathway; UMP from orotate: step 2/2. This Cyberlindnera jadinii (Torula yeast) protein is Orotidine 5'-phosphate decarboxylase (URA3).